We begin with the raw amino-acid sequence, 220 residues long: NADH-quinone oxidoreductase subunit I (220 aa).

4Fe-4S ferredoxin-type domains lie at 71–102 (LQRL…IITH) and 112–141 (DSYT…MGNR). [4Fe-4S] cluster is bound by residues Cys-82, Cys-85, Cys-88, Cys-92, Cys-121, Cys-124, Cys-127, and Cys-131. The tract at residues 187–220 (MQATPLDYVQEPSKEESKEESPTSPESHKGDENV) is disordered. A compositionally biased stretch (basic and acidic residues) spans 198–220 (PSKEESKEESPTSPESHKGDENV).

The protein belongs to the complex I 23 kDa subunit family. As to quaternary structure, NDH-1 is composed of 14 different subunits. Subunits NuoA, H, J, K, L, M, N constitute the membrane sector of the complex. Requires [4Fe-4S] cluster as cofactor.

The protein resides in the cell inner membrane. It carries out the reaction a quinone + NADH + 5 H(+)(in) = a quinol + NAD(+) + 4 H(+)(out). In terms of biological role, NDH-1 shuttles electrons from NADH, via FMN and iron-sulfur (Fe-S) centers, to quinones in the respiratory chain. The immediate electron acceptor for the enzyme in this species is believed to be ubiquinone. Couples the redox reaction to proton translocation (for every two electrons transferred, four hydrogen ions are translocated across the cytoplasmic membrane), and thus conserves the redox energy in a proton gradient. The protein is NADH-quinone oxidoreductase subunit I of Helicobacter pylori (strain J99 / ATCC 700824) (Campylobacter pylori J99).